The primary structure comprises 648 residues: RAF proto-oncogene serine/threonine-protein kinase (648 aa).

A Phosphoserine; by MAPK1 modification is found at Ser-29. Phosphoserine; by PKA and MAPK1 is present on Ser-43. Residues 56–131 enclose the RBD domain; the sequence is NTIRVFLPNK…IGEELQVDFL (76 aa). The Phorbol-ester/DAG-type zinc finger occupies 138 to 184; sequence THNFARKTFLKLAFCDICQKFLLNGFRCQTCGYKFHEHCSTKVPTMC. 8 residues coordinate Zn(2+): His-139, Cys-152, Cys-155, Cys-165, Cys-168, His-173, Cys-176, and Cys-184. Positions 220–334 are disordered; sequence SVSRMPVSSQ…QEKNKIRPRG (115 aa). Polar residues predominate over residues 239 to 271; that stretch reads TFNTSSPSSEGSLSQRQRSTSTPNVHMVSTTLP. Residue Ser-252 is modified to Phosphoserine. Ser-259 carries the phosphoserine; by PKA, PKC and PKB/AKT1 modification. Thr-268 bears the Phosphothreonine; by autocatalysis mark. Position 269 is a phosphothreonine; by PKA (Thr-269). A compositionally biased stretch (basic and acidic residues) spans 275-285; the sequence is RMIEDAIRSHS. A compositionally biased stretch (low complexity) spans 286-301; it reads ESASPSALSSSPNNLS. Residue Ser-289 is modified to Phosphoserine; by MAPK1. A Phosphoserine modification is found at Ser-296. The residue at position 301 (Ser-301) is a Phosphoserine; by MAPK1. The interval 331–349 is interaction with PEBP1/RKIP; sequence RPRGQRDSSYYWEIEASEV. Ser-338 carries the post-translational modification Phosphoserine; by PAK1, PAK2, PAK3 and PAK5. A Phosphoserine; by PAK1, PAK2 and PAK3 modification is found at Ser-339. Phosphotyrosine; by SRC is present on residues Tyr-340 and Tyr-341. One can recognise a Protein kinase domain in the interval 349–609; sequence VMLSTRIGSG…PQILSSIELL (261 aa). ATP-binding positions include 355–363 and Lys-375; that span reads IGSGSFGTV. The Proton acceptor role is filled by Asp-468. At Ser-471 the chain carries Phosphoserine. Phosphothreonine is present on Thr-491. A Phosphoserine modification is found at Ser-494. Ser-499 carries the phosphoserine; by PKC modification. Position 563 is a symmetric dimethylarginine; by PRMT5 (Arg-563). At Ser-621 the chain carries Phosphoserine. Ser-642 is subject to Phosphoserine; by MAPK1.

The protein belongs to the protein kinase superfamily. TKL Ser/Thr protein kinase family. RAF subfamily. In terms of assembly, monomer. Homodimer. Heterodimerizes with BRAF and this heterodimer possesses a highly increased kinase activity compared to the respective homodimers or monomers. Heterodimerization is mitogen-regulated and enhanced by 14-3-3 proteins. MAPK1/ERK2 activation can induce a negative feedback that promotes the dissociation of the heterodimer. Forms a multiprotein complex with Ras (M-Ras/MRAS), SHOC2 and protein phosphatase 1 (PPP1CA, PPP1CB and PPP1CC). Interacts with LZTR1. Interacts with Ras proteins; the interaction is antagonized by RIN1. Weakly interacts with RIT1. Interacts (via N-terminus) with RGS14 (via RBD domains); the interaction mediates the formation of a ternary complex with BRAF, a ternary complex inhibited by GNAI1. Probably forms a complex composed of chaperones HSP90 and HSP70, co-chaperones CDC37, PPP5C, TSC1 and client protein TSC2, CDK4, AKT, RAF1 and NR3C1; this complex does not contain co-chaperones STIP1/HOP and PTGES3/p23. Interacts with STK3/MST2; the interaction inhibits its pro-apoptotic activity. Interacts (when phosphorylated at Ser-259) with YWHAZ (unphosphorylated at 'Thr-232'). Interacts with MAP2K1/MEK1 and MAP2K2/MEK2. Interacts with MAP3K5/ASF1 (via N-terminus) and this interaction inhibits the proapoptotic function of MAP3K5/ASK1. Interacts with PAK1 (via kinase domain). The phosphorylated form interacts with PIN1. The Ser-338 and Ser-339 phosphorylated form (by PAK1) interacts with BCL2. Interacts with PEBP1/RKIP and this interaction is enhanced if RAF1 is phosphorylated on residues Ser-338, Ser-339, Tyr-340 and Tyr-341. Interacts with ADCY2, ADCY5, ADCY6, DGKH, RCAN1/DSCR1, PPP1R12A, PKB/AKT1, PPP2CA, PPP2R1B, SPRY2, SPRY4, CNKSR1/CNK1, KSR2 and PHB/prohibitin. Interacts with ROCK2. In its active form, interacts with PRMT5. Interacts with FAM83B; displaces 14-3-3 proteins from RAF1 and activates RAF1. Interacts with PDE8A; the interaction promotes RAF1 activity. Interacts with MFHAS1. Interacts with GLS. Interacts with NEK10 and MAP2K1; the interaction is direct with NEK10 and required for ERK1/2-signaling pathway activation in response to UV irradiation. Requires Zn(2+) as cofactor. Phosphorylation at Thr-269, Ser-338, Tyr-341, Thr-491 and Ser-494 results in its activation. Phosphorylation at Ser-29, Ser-43, Ser-289, Ser-296, Ser-301 and Ser-642 by MAPK1/ERK2 results in its inactivation. Phosphorylation at Ser-259 induces the interaction with YWHAZ and inactivates kinase activity. Dephosphorylation of Ser-259 by the SHOC2-MRAS-PP1c (SMP) complex consisting of SHOC2, GTP-bound M-Ras/MRAS and the catalytic subunit of protein phosphatase 1 (PPP1CA, PPP1CB or PPP1CC); this relieves inactivation and stimulates kinase activity. Phosphorylation at Ser-338 by PAK1 and PAK5 and Ser-339 by PAK1 is required for its mitochondrial localization. Phosphorylation at Ser-621 in response to growth factor treatment stabilizes the protein, possibly by preventing proteasomal degradation. Phosphorylation at Ser-289, Ser-296, Ser-301, Ser-338 and Ser-621 are somehow linked to the methylation potential of cells. Treatment of cells with HGF in the presence of the methylation inhibitor 5'-methylthioadenosine (MTA) results in increased phosphorylation at Ser-338 and Ser-621 and decreased phosphorylation at Ser-296, Ser-301 and Ser-338. Dephosphorylation at Ser-338 by PPP5C results in an activity decrease. Post-translationally, methylated at Arg-563 in response to EGF treatment. This modification leads to destabilization of the protein, possibly through proteasomal degradation. As to expression, in skeletal muscle, isoform 1 is more abundant than isoform 2.

It is found in the cytoplasm. The protein resides in the cell membrane. The protein localises to the mitochondrion. Its subcellular location is the nucleus. The enzyme catalyses L-seryl-[protein] + ATP = O-phospho-L-seryl-[protein] + ADP + H(+). It carries out the reaction L-threonyl-[protein] + ATP = O-phospho-L-threonyl-[protein] + ADP + H(+). Its activity is regulated as follows. Regulation is a highly complex process involving membrane recruitment, protein-protein interactions, dimerization, and phosphorylation/dephosphorylation events. Ras-GTP recruits RAF1 to the membrane, thereby promoting its activation. The inactive conformation of RAF1 is maintained by autoinhibitory interactions occurring between the N-terminal regulatory and the C-terminal catalytic domains and by the binding of a 14-3-3 protein that contacts two phosphorylation sites, Ser-259 and Ser-621. Upon mitogenic stimulation, Ras and PPP2R1A cooperate to release autoinhibition and the subsequent phosphorylation of activating sites: Ser-338, Tyr-341, Thr-491, and Ser-494, yields a fully active kinase. Through a negative feedback mechanism involving MAPK1/ERK2, RAF1 is phosphorylated on Ser-29, Ser-43, Ser-289, Ser-296, Ser-301 and Ser-642 by MAPK1/ERK2, which yields an inactive, desensitized kinase. The signaling-competent conformation of RAF1 is finally re-established by the coordinated action of PIN1, a prolyl isomerase that converts pSer and pThr residues from the cis to the trans conformation, which is preferentially recognized and dephosphorylated by PPP2R1A. Activated by homodimerization and heterodimerization (with BRAF). Also regulated through association with other proteins such as KSR2, CNKSR1/CNK1, PEBP1/RKIP, PHB/prohibitin and SPRY4. PEBP1/RKIP acts by dissociating RAF1 from its substrates MAP2K1/MEK1 and MAP2K2/MEK2. PHB/prohibitin facilitates the displacement of 14-3-3 from RAF1 by activated Ras, thereby promoting cell membrane localization and phosphorylation of RAF1 at the activating Ser-338. SPRY4 inhibits Ras-independent, but not Ras-dependent, activation of RAF1. CNKSR1/CNK1 regulates Src-mediated RAF1 activation. In terms of biological role, serine/threonine-protein kinase that acts as a regulatory link between the membrane-associated Ras GTPases and the MAPK/ERK cascade, and this critical regulatory link functions as a switch determining cell fate decisions including proliferation, differentiation, apoptosis, survival and oncogenic transformation. RAF1 activation initiates a mitogen-activated protein kinase (MAPK) cascade that comprises a sequential phosphorylation of the dual-specific MAPK kinases (MAP2K1/MEK1 and MAP2K2/MEK2) and the extracellular signal-regulated kinases (MAPK3/ERK1 and MAPK1/ERK2). The phosphorylated form of RAF1 (on residues Ser-338 and Ser-339, by PAK1) phosphorylates BAD/Bcl2-antagonist of cell death at 'Ser-75'. Phosphorylates adenylyl cyclases: ADCY2, ADCY5 and ADCY6, resulting in their activation. Phosphorylates PPP1R12A resulting in inhibition of the phosphatase activity. Phosphorylates TNNT2/cardiac muscle troponin T. Can promote NF-kB activation and inhibit signal transducers involved in motility (ROCK2), apoptosis (MAP3K5/ASK1 and STK3/MST2), proliferation and angiogenesis (RB1). Can protect cells from apoptosis also by translocating to the mitochondria where it binds BCL2 and displaces BAD/Bcl2-antagonist of cell death. Regulates Rho signaling and migration, and is required for normal wound healing. Plays a role in the oncogenic transformation of epithelial cells via repression of the TJ protein, occludin (OCLN) by inducing the up-regulation of a transcriptional repressor SNAI2/SLUG, which induces down-regulation of OCLN. Restricts caspase activation in response to selected stimuli, notably Fas stimulation, pathogen-mediated macrophage apoptosis, and erythroid differentiation. In Homo sapiens (Human), this protein is RAF proto-oncogene serine/threonine-protein kinase.